Reading from the N-terminus, the 355-residue chain is Anthranilate phosphoribosyltransferase (355 aa).

Residues Gly91, 94 to 95, Thr99, 101 to 104, 119 to 127, and Ala131 contribute to the 5-phospho-alpha-D-ribose 1-diphosphate site; these read GD, NIST, and KHGNRAMSS. Gly91 contributes to the anthranilate binding site. Ser103 contacts Mg(2+). Asn122 contributes to the anthranilate binding site. Residue Arg177 participates in anthranilate binding. Residues Asp234 and Glu235 each contribute to the Mg(2+) site.

Belongs to the anthranilate phosphoribosyltransferase family. As to quaternary structure, homodimer. It depends on Mg(2+) as a cofactor.

It catalyses the reaction N-(5-phospho-beta-D-ribosyl)anthranilate + diphosphate = 5-phospho-alpha-D-ribose 1-diphosphate + anthranilate. Its pathway is amino-acid biosynthesis; L-tryptophan biosynthesis; L-tryptophan from chorismate: step 2/5. Participates in the tryptophan-dependent indole-3-acetic acid production, which is a phytohormone released by A.brasilense. In terms of biological role, catalyzes the transfer of the phosphoribosyl group of 5-phosphorylribose-1-pyrophosphate (PRPP) to anthranilate to yield N-(5'-phosphoribosyl)-anthranilate (PRA). This Azospirillum brasilense protein is Anthranilate phosphoribosyltransferase.